The chain runs to 1028 residues: Beta-galactosidase (1028 aa).

Asn104 and Asp203 together coordinate substrate. Asp203 is a binding site for Na(+). Mg(2+) contacts are provided by Glu418, His420, and Glu463. Residues Glu463 and 539–542 (EYAH) contribute to the substrate site. Glu463 (proton donor) is an active-site residue. Glu539 serves as the catalytic Nucleophile. Asn599 serves as a coordination point for Mg(2+). Na(+)-binding residues include Phe603 and Asn606. Asn606 and Trp1003 together coordinate substrate.

This sequence belongs to the glycosyl hydrolase 2 family. As to quaternary structure, homotetramer. Mg(2+) is required as a cofactor. The cofactor is Na(+).

The enzyme catalyses Hydrolysis of terminal non-reducing beta-D-galactose residues in beta-D-galactosides.. In Enterobacter cloacae, this protein is Beta-galactosidase.